Consider the following 150-residue polypeptide: 3-dehydroquinate dehydratase (150 aa).

Catalysis depends on Tyr-26, which acts as the Proton acceptor. Residues Asn-77, His-83, and Asp-90 each coordinate substrate. His-103 (proton donor) is an active-site residue. Substrate is bound by residues 104–105 and Arg-114; that span reads LS.

Belongs to the type-II 3-dehydroquinase family. In terms of assembly, homododecamer.

The enzyme catalyses 3-dehydroquinate = 3-dehydroshikimate + H2O. Its pathway is metabolic intermediate biosynthesis; chorismate biosynthesis; chorismate from D-erythrose 4-phosphate and phosphoenolpyruvate: step 3/7. Functionally, catalyzes a trans-dehydration via an enolate intermediate. This chain is 3-dehydroquinate dehydratase, found in Pseudoalteromonas translucida (strain TAC 125).